The sequence spans 796 residues: ATP-dependent DNA helicase PIF6 (796 aa).

The tract at residues 197–230 (RPTGLPSAHSGGKLPKHMGGDELNPQLEGSTTPG) is disordered. 255-262 (GSAGTGKT) is a binding site for ATP. A DNA-binding region spans residues 636–655 (QAYVALSRVRSREDLMLTAF). Disordered stretches follow at residues 692-719 (KGKT…PEEH) and 762-796 (TSSA…VDDD).

It belongs to the helicase family. PIF1 subfamily. Monomer. Mg(2+) serves as cofactor.

The protein resides in the nucleus. It carries out the reaction Couples ATP hydrolysis with the unwinding of duplex DNA at the replication fork by translocating in the 5'-3' direction. This creates two antiparallel DNA single strands (ssDNA). The leading ssDNA polymer is the template for DNA polymerase III holoenzyme which synthesizes a continuous strand.. The enzyme catalyses ATP + H2O = ADP + phosphate + H(+). Its function is as follows. DNA-dependent ATPase and 5'-3' DNA helicase required for the maintenance of genome stability. In Trypanosoma brucei brucei (strain 927/4 GUTat10.1), this protein is ATP-dependent DNA helicase PIF6.